We begin with the raw amino-acid sequence, 369 residues long: Flagellar P-ring protein (369 aa).

Positions 1–22 (MLNFKHLMAAALLLSTSLGVQA) are cleaved as a signal peptide.

It belongs to the FlgI family. In terms of assembly, the basal body constitutes a major portion of the flagellar organelle and consists of four rings (L,P,S, and M) mounted on a central rod.

It localises to the periplasm. The protein resides in the bacterial flagellum basal body. Functionally, assembles around the rod to form the L-ring and probably protects the motor/basal body from shearing forces during rotation. The protein is Flagellar P-ring protein of Pseudomonas fluorescens (strain ATCC BAA-477 / NRRL B-23932 / Pf-5).